The following is a 162-amino-acid chain: Peptidyl-prolyl cis-trans isomerase (162 aa).

In terms of domain architecture, PPIase cyclophilin-type spans 5–161 (FFDVQFGGDA…TTIKIVDSGV (157 aa)).

This sequence belongs to the cyclophilin-type PPIase family. PPIase A subfamily.

It carries out the reaction [protein]-peptidylproline (omega=180) = [protein]-peptidylproline (omega=0). With respect to regulation, binds cyclosporin A (CsA). CsA mediates some of its effects via an inhibitory action on PPIase. Functionally, PPIases accelerate the folding of proteins. It catalyzes the cis-trans isomerization of proline imidic peptide bonds in oligopeptides. In Paramecium primaurelia, this protein is Peptidyl-prolyl cis-trans isomerase.